The chain runs to 209 residues: Probable GTP-binding protein EngB (209 aa).

The 192-residue stretch at 12–203 (INLEIIFAGR…RDRLHEMKRD (192 aa)) folds into the EngB-type G domain. GTP-binding positions include 20-27 (GRSNVGKS), 45-49 (GVTLR), 62-65 (DMPG), 142-145 (NKMD), and 179-181 (ISA). Mg(2+) is bound by residues Ser-27 and Thr-47.

The protein belongs to the TRAFAC class TrmE-Era-EngA-EngB-Septin-like GTPase superfamily. EngB GTPase family. Mg(2+) is required as a cofactor.

Necessary for normal cell division and for the maintenance of normal septation. The chain is Probable GTP-binding protein EngB from Methanosarcina mazei (strain ATCC BAA-159 / DSM 3647 / Goe1 / Go1 / JCM 11833 / OCM 88) (Methanosarcina frisia).